A 119-amino-acid polypeptide reads, in one-letter code: Large ribosomal subunit protein uL18 (119 aa).

The protein belongs to the universal ribosomal protein uL18 family. In terms of assembly, part of the 50S ribosomal subunit; part of the 5S rRNA/L5/L18/L25 subcomplex. Contacts the 5S and 23S rRNAs.

This is one of the proteins that bind and probably mediate the attachment of the 5S RNA into the large ribosomal subunit, where it forms part of the central protuberance. This is Large ribosomal subunit protein uL18 from Clostridium tetani (strain Massachusetts / E88).